Here is a 186-residue protein sequence, read N- to C-terminus: MNDSGVSKIYASALLGAVNSPEEVEQELGDLVQLLFKEEKIRNFFLSPTVSIEEKENILEKNLRGKILDVTLNFLGVLLNKGRFINLPEIQKRFTVELDKKKGRVRAQIKSYPSLEPAQITKLGSILSEKFKSEFILEVSEDKTLLGGFVVQFNDLKIEKSIASQLGEIKKAMLEKKLPVGAVYEN.

Belongs to the ATPase delta chain family. In terms of assembly, F-type ATPases have 2 components, F(1) - the catalytic core - and F(0) - the membrane proton channel. F(1) has five subunits: alpha(3), beta(3), gamma(1), delta(1), epsilon(1). F(0) has three main subunits: a(1), b(2) and c(10-14). The alpha and beta chains form an alternating ring which encloses part of the gamma chain. F(1) is attached to F(0) by a central stalk formed by the gamma and epsilon chains, while a peripheral stalk is formed by the delta and b chains.

The protein resides in the cell inner membrane. Its function is as follows. F(1)F(0) ATP synthase produces ATP from ADP in the presence of a proton or sodium gradient. F-type ATPases consist of two structural domains, F(1) containing the extramembraneous catalytic core and F(0) containing the membrane proton channel, linked together by a central stalk and a peripheral stalk. During catalysis, ATP synthesis in the catalytic domain of F(1) is coupled via a rotary mechanism of the central stalk subunits to proton translocation. In terms of biological role, this protein is part of the stalk that links CF(0) to CF(1). It either transmits conformational changes from CF(0) to CF(1) or is implicated in proton conduction. This Leptospira borgpetersenii serovar Hardjo-bovis (strain JB197) protein is ATP synthase subunit delta.